A 209-amino-acid chain; its full sequence is ATP synthase subunit b 2 (209 aa).

A helical transmembrane segment spans residues 9–29; sequence WWGWVTLSVLVMVAGDGTLAF.

The protein belongs to the ATPase B chain family. In terms of assembly, F-type ATPases have 2 components, F(1) - the catalytic core - and F(0) - the membrane proton channel. F(1) has five subunits: alpha(3), beta(3), gamma(1), delta(1), epsilon(1). F(0) has three main subunits: a(1), b(2) and c(10-14). The alpha and beta chains form an alternating ring which encloses part of the gamma chain. F(1) is attached to F(0) by a central stalk formed by the gamma and epsilon chains, while a peripheral stalk is formed by the delta and b chains.

The protein resides in the cell inner membrane. Functionally, f(1)F(0) ATP synthase produces ATP from ADP in the presence of a proton or sodium gradient. F-type ATPases consist of two structural domains, F(1) containing the extramembraneous catalytic core and F(0) containing the membrane proton channel, linked together by a central stalk and a peripheral stalk. During catalysis, ATP synthesis in the catalytic domain of F(1) is coupled via a rotary mechanism of the central stalk subunits to proton translocation. Its function is as follows. Component of the F(0) channel, it forms part of the peripheral stalk, linking F(1) to F(0). This Desulfosudis oleivorans (strain DSM 6200 / JCM 39069 / Hxd3) (Desulfococcus oleovorans) protein is ATP synthase subunit b 2.